The following is a 319-amino-acid chain: Ciliary microtubule inner protein 2A (319 aa).

The protein belongs to the CIMIP2 family. As to quaternary structure, microtubule inner protein component of sperm flagellar doublet microtubules.

The protein resides in the cytoplasm. The protein localises to the cytoskeleton. It localises to the flagellum axoneme. In terms of biological role, microtubule inner protein (MIP) part of the dynein-decorated doublet microtubules (DMTs) in flagellum axoneme. Binds to the intra-tubulin interfaces. The protein is Ciliary microtubule inner protein 2A (Cimip2a) of Mus musculus (Mouse).